The sequence spans 343 residues: WAT1-related protein At1g43650 (343 aa).

10 consecutive transmembrane segments (helical) span residues 9–29 (MAMV…KVAI), 36–56 (FVFV…FAFF), 65–85 (LSFI…TLSL), 98–118 (TFAA…ALLF), 130–150 (GVAK…FAFV), 175–195 (SVKG…WIIM), 209–229 (LVAL…VAVN), 239–259 (FGLP…LTYW), 272–292 (FTAL…SFLF), and 296–316 (FYLG…LGLW). 2 EamA domains span residues 16–139 (IVYA…GSMV) and 188–313 (CWCL…GLYL).

Belongs to the drug/metabolite transporter (DMT) superfamily. Plant drug/metabolite exporter (P-DME) (TC 2.A.7.4) family.

It is found in the membrane. The protein is WAT1-related protein At1g43650 of Arabidopsis thaliana (Mouse-ear cress).